The chain runs to 34 residues: MEVNILAFIATALFILVPTAFLLIIYVKTISQSD.

A helical transmembrane segment spans residues 5–25; that stretch reads ILAFIATALFILVPTAFLLII.

Belongs to the PsbM family. As to quaternary structure, PSII is composed of 1 copy each of membrane proteins PsbA, PsbB, PsbC, PsbD, PsbE, PsbF, PsbH, PsbI, PsbJ, PsbK, PsbL, PsbM, PsbT, PsbX, PsbY, PsbZ, Psb30/Ycf12, at least 3 peripheral proteins of the oxygen-evolving complex and a large number of cofactors. It forms dimeric complexes.

The protein resides in the plastid. It is found in the chloroplast thylakoid membrane. In terms of biological role, one of the components of the core complex of photosystem II (PSII). PSII is a light-driven water:plastoquinone oxidoreductase that uses light energy to abstract electrons from H(2)O, generating O(2) and a proton gradient subsequently used for ATP formation. It consists of a core antenna complex that captures photons, and an electron transfer chain that converts photonic excitation into a charge separation. This subunit is found at the monomer-monomer interface. The polypeptide is Photosystem II reaction center protein M (Cucumis sativus (Cucumber)).